A 548-amino-acid polypeptide reads, in one-letter code: Membrane protein insertase YidC (548 aa).

A helical membrane pass occupies residues 6-26 (NLLVIALLFVSFMIWQAWEQD). The interval 28-55 (NPQPQAQQTTQTTTTAAGSAADQGVPAS) is disordered. Residues 30 to 50 (QPQAQQTTQTTTTAAGSAADQ) show a composition bias toward low complexity. The next 4 helical transmembrane spans lie at 350-370 (FVGNWGFSIIIITFIVRGIMY), 420-440 (LGGCFPLLIQMPIFLALYYML), 458-478 (LSAQDPYYILPILMGVTMFFI), and 499-519 (PVIFTVFFLWFPSGLVLYYIV).

The protein belongs to the OXA1/ALB3/YidC family. Type 1 subfamily. In terms of assembly, interacts with the Sec translocase complex via SecD. Specifically interacts with transmembrane segments of nascent integral membrane proteins during membrane integration.

It is found in the cell inner membrane. Its function is as follows. Required for the insertion and/or proper folding and/or complex formation of integral membrane proteins into the membrane. Involved in integration of membrane proteins that insert both dependently and independently of the Sec translocase complex, as well as at least some lipoproteins. Aids folding of multispanning membrane proteins. The chain is Membrane protein insertase YidC from Shigella boydii serotype 18 (strain CDC 3083-94 / BS512).